A 282-amino-acid polypeptide reads, in one-letter code: 4-hydroxy-tetrahydrodipicolinate reductase (282 aa).

12–17 (GVTGRM) provides a ligand contact to NAD(+). Residue Arg-44 coordinates NADP(+). NAD(+)-binding positions include 107–109 (GTT) and 131–134 (SSNF). His-164 (proton donor/acceptor) is an active-site residue. His-165 provides a ligand contact to (S)-2,3,4,5-tetrahydrodipicolinate. The Proton donor role is filled by Lys-168. 174–175 (GT) serves as a coordination point for (S)-2,3,4,5-tetrahydrodipicolinate.

This sequence belongs to the DapB family. Homotetramer.

The protein resides in the cytoplasm. It catalyses the reaction (S)-2,3,4,5-tetrahydrodipicolinate + NAD(+) + H2O = (2S,4S)-4-hydroxy-2,3,4,5-tetrahydrodipicolinate + NADH + H(+). The catalysed reaction is (S)-2,3,4,5-tetrahydrodipicolinate + NADP(+) + H2O = (2S,4S)-4-hydroxy-2,3,4,5-tetrahydrodipicolinate + NADPH + H(+). It participates in amino-acid biosynthesis; L-lysine biosynthesis via DAP pathway; (S)-tetrahydrodipicolinate from L-aspartate: step 4/4. Functionally, catalyzes the conversion of 4-hydroxy-tetrahydrodipicolinate (HTPA) to tetrahydrodipicolinate. In Blochmanniella pennsylvanica (strain BPEN), this protein is 4-hydroxy-tetrahydrodipicolinate reductase.